A 1225-amino-acid chain; its full sequence is ATP-dependent helicase/nuclease subunit A (1225 aa).

The UvrD-like helicase ATP-binding domain occupies 11-478; that stretch reads AQWTDAQWKS…IDLSKNFRSR (468 aa). 32–39 provides a ligand contact to ATP; that stretch reads AAAGSGKT. The 312-residue stretch at 479–790 folds into the UvrD-like helicase C-terminal domain; the sequence is KEVLATTNYL…RMMTVHSSKG (312 aa). The span at 999 to 1014 shows a compositional bias: basic and acidic residues; the sequence is EKPSKQSVSELKRQLE. A disordered region spans residues 999–1018; sequence EKPSKQSVSELKRQLETEES.

Belongs to the helicase family. AddA subfamily. In terms of assembly, heterodimer of AddA and AddB/RexB. The cofactor is Mg(2+).

The catalysed reaction is Couples ATP hydrolysis with the unwinding of duplex DNA by translocating in the 3'-5' direction.. It carries out the reaction ATP + H2O = ADP + phosphate + H(+). The heterodimer acts as both an ATP-dependent DNA helicase and an ATP-dependent, dual-direction single-stranded exonuclease. Recognizes the chi site generating a DNA molecule suitable for the initiation of homologous recombination. The AddA nuclease domain is required for chi fragment generation; this subunit has the helicase and 3' -&gt; 5' nuclease activities. The polypeptide is ATP-dependent helicase/nuclease subunit A (Staphylococcus haemolyticus (strain JCSC1435)).